The sequence spans 2243 residues: MEDQQEENMQQLLNLLPKDQRQIFEIFIQWLNGKSSGPIQLHQNALLTVLQASPYPALQLLQLLHERSKLHIGQIISTLLRQLLDGDVASPRSLCVLANFPASVLEASTLRQKLMTRLVVDSITSEHLMLTMLARSDGQLLDDLLHEQQLTMRAQCSEAAPTKLLVLWLALNEREHFVASVCQHLKDFKCFQDVTLRNNLLILRLANEFALGSQTLEELGCLEKLLAEFDVSAVPEKLQEVHGFFYADFQRLSTLLNFLRPREISKTLRVDALLRAPGVLPLIHENGIHFKHQELHRLIEDTYKWQQLTPALKCHHQEEVEILSYYTALCHVYDVVLDQGEQTTKTKLVQLSVQLRQLHQLGALCSLLEDIFLLVFLRWEQLEPNSQRKGEDGENDEEDDEQYVDDDVASPPRPTAVHSQRTRYGFICRSASLHALFTFLKAFVTKKIHSQDYKSAPEQQGRFQRLVDAISEALWKLGVLQKIEQSLLKSAPSISCLLEPDQLLQLVQLHSTAKKKASSDDESRERSNHASSLNRRKARRQRRAVSFSGGVAGKASADGGLAMEQLRARAQLLSGSGSRKNSSVTSPCERSIIPKMLSTPEQLAIMALALKNFNDVKKIIETFHLEHSQLNRELHFMEQQQLVKQKLSAIYANYQILEGQQANSGETTVEQIKGVAAKGFELSKIISVVDNFSQAHRLQQSPELKALIQRHNTSAQQGFLQQFEERNLNALIICDLIVNLGFNREITSNLLLVIRRQQQQKKGGDEASNTPGSSELGAMNLLQNLCECMRLLERSGQQAALNELLSLKSYPLRPAVLALQLQREAAFQTLYQKEPSEYSHGHELRSNANQFQQLRSRHNYYARFCTYVQQLARLLQLRDPNLEYHTTQLLRNDPYEVIGELIYECGITPLEIEASVAALHLNLVHVIALNICPQLSEEPTKRLPRVVAPQKQESIHNYISQHNQLLAHILLAIQLGSLPDGDADVDFSFLGHLVHLSEVNVLASVYDGNRVLAALNAYKLESARLDQLVTDQEQLLQILLLGMSGQTDSPNRHKSRIDQLIGDLIEKDPRNIHLVVHMGNLGQRAQLLKEHFTRIPSSQQAKELIERTLHHRSAAKSIPTALRSELEHTLSDITIYARVSALLKFESWPQAYDFGRQTPNVIFEQLLQRRRFGLCLEWSRVVYLAGSAGQQRVCLLTLLDALLELRDGEELDESLLGIVEMFPPNPLVNFLDTHKDKFRSLPLLQWVIDYLEGHARDPRLYRNYQLSLEFLRQMDTNERSPFWKLIRHPLLIVEQLVMNARFELLGKLLDAARSKLLKERPLGPCPYCFDKTGHVYDVQSSAGLGSGAGETPAKIRFQLGQTTSEAFILLNFNSYQQDHFVGQDCLDLLLRIYASKALDYHVANVRAASEPSSLGTDVHNSLDSLCGAFVMPKQAPNRQQWTRDEEASHCMCCRRAAFTMLMRRHHCRRCGRVVCYACSTHRIRIPELYDELEVRICNDCAACSTPAKDQGDGTSSERSAISGQVSKSSGRSDSCKWQLSGIITHDKLLREEFSYEHAPSVALSLSILRNHVEQRSCVDLLLFHCRKLEKLIVPNPEVDYGLVAKMINCLAFAAKVRGAPGELENIREHSEIIMAVVQQGCESLIPTGPLNNHNLRKLADALVEAEHWTLALEVHLKCGFATTGVMAAHGLACLRAGCYDAAREKFAHCMTRLSSEQLNSSICKNIFGVASTEAVLLPRKRPQRGPALLQEILQLIAAIPQVQTQPETLHRASLIRSSNTSLASLFTRRREPYVQPRPLQEPALNIMNALAGLKNLAKGQYGGQMPTSEESRRQERGFEESLHYVLTYGSHADILTFLMRREELRAALRYWQHQQLDADLFIHHIFYPQLANGGLNVLMDELQQLDDAQFTAWRLPLLQTCRHLEQQQQLSSLYQLQLLLKDPIRASMTCVKFYALQCENFQKLHANAQHLLSALRHLQGELDMAEWEHLQRQQARRNSVSSTASVRGACFAMQMDARALNGHINTIRRQLEVAKFLDKCEREQPPDEPLRTIQTLKQIRLESSRGTLPTLFEGAADRIQICILILMCGKNIDEGFGLAYGIMQDFKLAALKVFGATAKYLSRNQRLGEVERLLDCIGSNNGGDISTESDEILSIAINAAVHSSAPETKQMLDRLIKRIGSVELRVSSYIYIGQLKSAYLLANKHDRLADIRRILRQAELTGQVHIKKLCDMKLQLSAAPTPL.

Disordered stretches follow at residues 386-416 and 514-556; these read SQRK…RPTA and KKKA…GKAS. Residues 393–408 show a composition bias toward acidic residues; that stretch reads GENDEEDDEQYVDDDV. Tyr-403 carries the phosphotyrosine modification. Over residues 517 to 528 the composition is skewed to basic and acidic residues; the sequence is ASSDDESRERSN. Basic residues predominate over residues 534-543; the sequence is NRRKARRQRR. Residues 617 to 644 form an LRR 1 repeat; that stretch reads KKIIETFHLEHSQLNRELHFMEQQQLVK. Ser-1424 carries the phosphoserine modification. The FYVE-type zinc-finger motif lies at 1444–1500; that stretch reads DEEASHCMCCRRAAFTMLMRRHHCRRCGRVVCYACSTHRIRIPELYDELEVRICNDC. Zn(2+)-binding residues include Cys-1450, Cys-1453, Cys-1467, Cys-1470, Cys-1475, Cys-1478, Cys-1497, and Cys-1500. The tract at residues 1505 to 1534 is disordered; sequence TPAKDQGDGTSSERSAISGQVSKSSGRSDS. Over residues 1512 to 1534 the composition is skewed to polar residues; the sequence is DGTSSERSAISGQVSKSSGRSDS. Residues 1887-1912 form an LRR 2 repeat; the sequence is YPQLANGGLNVLMDELQQLDDAQFTA.

It belongs to the ZFYVE26 family.

Its function is as follows. Phosphatidylinositol 3-phosphate (PtdIns[3]P)-binding protein. Involved in autophagy. The sequence is that of Zinc finger FYVE domain-containing protein 26 homolog from Drosophila melanogaster (Fruit fly).